We begin with the raw amino-acid sequence, 184 residues long: Lipocalin-15 (184 aa).

The first 20 residues, 1–20 (MMSFLLGAILTLLWAPTAQA), serve as a signal peptide directing secretion. Residues Cys-83 and Cys-176 are joined by a disulfide bond.

The protein belongs to the calycin superfamily. Lipocalin family.

The protein resides in the secreted. The chain is Lipocalin-15 (LCN15) from Homo sapiens (Human).